The following is a 75-amino-acid chain: U6-lycotoxin-Ls1d (75 aa).

Residues 1–21 (MKLLLFTALVLVVISLVEVEA) form the signal peptide. The propeptide occupies 22–25 (ENER).

The protein belongs to the neurotoxin 19 (CSTX) family. 06 (U6-Lctx) subfamily. In terms of processing, contains 4 disulfide bonds. As to expression, expressed by the venom gland.

It is found in the secreted. The polypeptide is U6-lycotoxin-Ls1d (Lycosa singoriensis (Wolf spider)).